The primary structure comprises 405 residues: uncharacterized protein (405 aa).

This sequence belongs to the UDP-glycosyltransferase family.

This is an uncharacterized protein from Bacillus subtilis (strain 168).